A 392-amino-acid polypeptide reads, in one-letter code: MQLPIPRINSTNYQRILMETKQSGDREKTIEDIKNVILLMPHKSPIVTNFISDLARDDAALKDRMVRTINEILETGDIHGLISASFTLRRLGVGGTENLWWVGKIPVVNPLFDGIDLAIPSDSLDKCREEAERMLETVDEESFEEVFCVVQIIKGFRFSVPECLSQLGPISRHKSLVDGIRILHREENSLYLCVLVLELAKKQGFLKILLEDLDSFDHEFRDLLLSLLFECFHSPGEENSVYISSSYTPLRTPEDLELFKHLTTENTARIMKRISGRGKVEKFFHEEEAAAGKEVLRISREEFEKTDFGDKKMFFRNFCLLGSPSISHFLTYLEIYKEHFVLDKEDQKAFLSIFFEVFGGFESFCRIVVGKMVQFKIIDPELVTDFDGNQAL.

This is an uncharacterized protein from Encephalitozoon cuniculi (strain GB-M1) (Microsporidian parasite).